A 296-amino-acid chain; its full sequence is NAD kinase (296 aa).

Catalysis depends on aspartate 72, which acts as the Proton acceptor. NAD(+) contacts are provided by residues 72–73 (DG), 146–147 (ND), arginine 157, lysine 174, aspartate 176, 187–192 (TAYALS), and glutamine 247.

It belongs to the NAD kinase family. It depends on a divalent metal cation as a cofactor.

It is found in the cytoplasm. It catalyses the reaction NAD(+) + ATP = ADP + NADP(+) + H(+). Involved in the regulation of the intracellular balance of NAD and NADP, and is a key enzyme in the biosynthesis of NADP. Catalyzes specifically the phosphorylation on 2'-hydroxyl of the adenosine moiety of NAD to yield NADP. This Pseudomonas putida (strain GB-1) protein is NAD kinase.